Reading from the N-terminus, the 37-residue chain is Omega-conotoxin-like S6.7 (37 aa).

Residues 1 to 4 (KSTS) constitute a propeptide that is removed on maturation. 3 cysteine pairs are disulfide-bonded: cysteine 5/cysteine 20, cysteine 12/cysteine 23, and cysteine 19/cysteine 32.

The protein belongs to the conotoxin O1 superfamily. Expressed by the venom duct.

It is found in the secreted. Functionally, omega-conotoxins act at presynaptic membranes, they bind and block voltage-gated calcium channels (Cav). This toxin blocks N-, P- and Q-type calcium channels. This chain is Omega-conotoxin-like S6.7, found in Conus striatus (Striated cone).